Reading from the N-terminus, the 166-residue chain is Cyclic pyranopterin monophosphate synthase (166 aa).

Substrate is bound by residues 83 to 85 (LCH) and 121 to 122 (ME). Asp-136 is an active-site residue.

This sequence belongs to the MoaC family. In terms of assembly, homohexamer; trimer of dimers.

It catalyses the reaction (8S)-3',8-cyclo-7,8-dihydroguanosine 5'-triphosphate = cyclic pyranopterin phosphate + diphosphate. It functions in the pathway cofactor biosynthesis; molybdopterin biosynthesis. Functionally, catalyzes the conversion of (8S)-3',8-cyclo-7,8-dihydroguanosine 5'-triphosphate to cyclic pyranopterin monophosphate (cPMP). In Rhodospirillum rubrum (strain ATCC 11170 / ATH 1.1.1 / DSM 467 / LMG 4362 / NCIMB 8255 / S1), this protein is Cyclic pyranopterin monophosphate synthase.